Consider the following 314-residue polypeptide: Protoheme IX farnesyltransferase (314 aa).

8 helical membrane passes run 36 to 56 (IGIVNSNLITTIAGFLLAISF), 65 to 85 (WGTFLLTIIGTALVIAGGCIV), 114 to 134 (SVLTFGLLTTAVGLLLLMFTS), 135 to 155 (WYATLFAFIGWFGYVVLYTIW), 179 to 199 (WAAISPSFHIVPFVMFLIMFI), 237 to 257 (IIVYIACLLPLPFFLLPTMGI), 259 to 279 (FAVIATLLNLGWLAIAFTGLF), and 290 to 310 (IFIFSLNYLIILFPLMIIVKL).

Belongs to the UbiA prenyltransferase family. Protoheme IX farnesyltransferase subfamily. In terms of assembly, interacts with CtaA.

Its subcellular location is the cell membrane. The catalysed reaction is heme b + (2E,6E)-farnesyl diphosphate + H2O = Fe(II)-heme o + diphosphate. It participates in porphyrin-containing compound metabolism; heme O biosynthesis; heme O from protoheme: step 1/1. Converts heme B (protoheme IX) to heme O by substitution of the vinyl group on carbon 2 of heme B porphyrin ring with a hydroxyethyl farnesyl side group. In Oceanobacillus iheyensis (strain DSM 14371 / CIP 107618 / JCM 11309 / KCTC 3954 / HTE831), this protein is Protoheme IX farnesyltransferase.